The primary structure comprises 62 residues: Large ribosomal subunit protein bL28 (62 aa).

The tract at residues 1–26 (MARKCYVTGKSPKSGNNRSHALNKTK) is disordered. Over residues 11–20 (SPKSGNNRSH) the composition is skewed to polar residues.

The protein belongs to the bacterial ribosomal protein bL28 family.

The polypeptide is Large ribosomal subunit protein bL28 (Exiguobacterium sp. (strain ATCC BAA-1283 / AT1b)).